The primary structure comprises 238 residues: 2-C-methyl-D-erythritol 4-phosphate cytidylyltransferase (238 aa).

Belongs to the IspD/TarI cytidylyltransferase family. IspD subfamily.

It catalyses the reaction 2-C-methyl-D-erythritol 4-phosphate + CTP + H(+) = 4-CDP-2-C-methyl-D-erythritol + diphosphate. The protein operates within isoprenoid biosynthesis; isopentenyl diphosphate biosynthesis via DXP pathway; isopentenyl diphosphate from 1-deoxy-D-xylulose 5-phosphate: step 2/6. Functionally, catalyzes the formation of 4-diphosphocytidyl-2-C-methyl-D-erythritol from CTP and 2-C-methyl-D-erythritol 4-phosphate (MEP). This Shewanella amazonensis (strain ATCC BAA-1098 / SB2B) protein is 2-C-methyl-D-erythritol 4-phosphate cytidylyltransferase.